Consider the following 201-residue polypeptide: Anthranilate synthase component 2 (201 aa).

The Glutamine amidotransferase type-1 domain maps to asparagine 3–alanine 196. Glycine 57–glycine 59 lines the L-glutamine pocket. Residue cysteine 84 is the Nucleophile; for GATase activity of the active site. L-glutamine contacts are provided by residues glutamine 88 and serine 134 to leucine 135. Catalysis depends on for GATase activity residues histidine 170 and glutamate 172.

Heterotetramer consisting of two non-identical subunits: a beta subunit (TrpG) and a large alpha subunit (TrpE).

It catalyses the reaction chorismate + L-glutamine = anthranilate + pyruvate + L-glutamate + H(+). It functions in the pathway amino-acid biosynthesis; L-tryptophan biosynthesis; L-tryptophan from chorismate: step 1/5. Part of a heterotetrameric complex that catalyzes the two-step biosynthesis of anthranilate, an intermediate in the biosynthesis of L-tryptophan. In the first step, the glutamine-binding beta subunit (TrpG) of anthranilate synthase (AS) provides the glutamine amidotransferase activity which generates ammonia as a substrate that, along with chorismate, is used in the second step, catalyzed by the large alpha subunit of AS (TrpE) to produce anthranilate. In the absence of TrpG, TrpE can synthesize anthranilate directly from chorismate and high concentrations of ammonia. This Vibrio cholerae serotype O1 (strain ATCC 39315 / El Tor Inaba N16961) protein is Anthranilate synthase component 2 (trpG).